Here is a 192-residue protein sequence, read N- to C-terminus: Peroxiredoxin tpx1 (192 aa).

A Thioredoxin domain is found at leucine 3–phenylalanine 161. Cysteine 48 (cysteine sulfenic acid (-SOH) intermediate) is an active-site residue. 2 positions are modified to phosphoserine: serine 105 and serine 148.

Belongs to the peroxiredoxin family. AhpC/Prx1 subfamily. As to quaternary structure, homodimer; disulfide-linked, upon oxidation. Interacts with srx1 in response to oxidative stress. Interacts with pap1 via transient disulfide linkages. In terms of processing, the enzyme can be inactivated by further oxidation of the cysteine sulfenic acid (C(P)-SOH) to sulphinic acid (C(P)-SO2H) instead of its condensation to a disulfide bond. It can be reactivated by forming a transient disulfide bond with sulfiredoxin srx1, which reduces the cysteine sulfinic acid in an ATP- and Mg-dependent manner.

The protein localises to the cytoplasm. It is found in the nucleus. It carries out the reaction a hydroperoxide + [thioredoxin]-dithiol = an alcohol + [thioredoxin]-disulfide + H2O. Thiol-specific peroxidase that catalyzes the reduction of hydrogen peroxide and organic hydroperoxides to water and alcohols, respectively. Plays a role in cell protection against oxidative stress by detoxifying peroxides and as sensor of hydrogen peroxide-mediated signaling events. Relays hydrogen peroxide as a signal to the transcription factor pap1 by inducing the formation of intramolecular disulfide bonds in pap1, which causes its nuclear accumulation and activation. Reduced by srx1 and this regulation acts as a molecular switch controlling the transcriptional response to hydrogen peroxide. This chain is Peroxiredoxin tpx1 (tpx1), found in Schizosaccharomyces pombe (strain 972 / ATCC 24843) (Fission yeast).